Reading from the N-terminus, the 444-residue chain is Tubulin beta-9 chain (444 aa).

Q11, E69, S138, G142, T143, G144, N204, and N226 together coordinate GTP. Residue E69 participates in Mg(2+) binding.

Belongs to the tubulin family. Dimer of alpha and beta chains. A typical microtubule is a hollow water-filled tube with an outer diameter of 25 nm and an inner diameter of 15 nM. Alpha-beta heterodimers associate head-to-tail to form protofilaments running lengthwise along the microtubule wall with the beta-tubulin subunit facing the microtubule plus end conferring a structural polarity. Microtubules usually have 13 protofilaments but different protofilament numbers can be found in some organisms and specialized cells. Interacts with TFCA. It depends on Mg(2+) as a cofactor.

It is found in the cytoplasm. It localises to the cytoskeleton. Its function is as follows. Tubulin is the major constituent of microtubules, a cylinder consisting of laterally associated linear protofilaments composed of alpha- and beta-tubulin heterodimers. Microtubules grow by the addition of GTP-tubulin dimers to the microtubule end, where a stabilizing cap forms. Below the cap, tubulin dimers are in GDP-bound state, owing to GTPase activity of alpha-tubulin. This is Tubulin beta-9 chain (TUBB9) from Arabidopsis thaliana (Mouse-ear cress).